We begin with the raw amino-acid sequence, 97 residues long: Co-chaperonin GroES (97 aa).

The protein belongs to the GroES chaperonin family. Heptamer of 7 subunits arranged in a ring. Interacts with the chaperonin GroEL.

Its subcellular location is the cytoplasm. Its function is as follows. Together with the chaperonin GroEL, plays an essential role in assisting protein folding. The GroEL-GroES system forms a nano-cage that allows encapsulation of the non-native substrate proteins and provides a physical environment optimized to promote and accelerate protein folding. GroES binds to the apical surface of the GroEL ring, thereby capping the opening of the GroEL channel. The chain is Co-chaperonin GroES from Nocardioides sp. (strain ATCC BAA-499 / JS614).